The primary structure comprises 503 residues: Arabinose import ATP-binding protein AraG (503 aa).

2 consecutive ABC transporter domains span residues 5 to 240 and 253 to 497; these read LRFD…MVGR and LGDV…LPQG. 37–44 serves as a coordination point for ATP; the sequence is GENGAGKS.

It belongs to the ABC transporter superfamily. Arabinose importer (TC 3.A.1.2.2) family. As to quaternary structure, the complex is composed of two ATP-binding proteins (AraG), two transmembrane proteins (AraH) and a solute-binding protein (AraF).

It localises to the cell inner membrane. It catalyses the reaction L-arabinose(out) + ATP + H2O = L-arabinose(in) + ADP + phosphate + H(+). Functionally, part of the ABC transporter complex AraFGH involved in arabinose import. Responsible for energy coupling to the transport system. This chain is Arabinose import ATP-binding protein AraG, found in Burkholderia pseudomallei (strain K96243).